Consider the following 445-residue polypeptide: N-succinylarginine dihydrolase (445 aa).

Residues 19–28 (AGLSFGNVAS), Asn110, and 137–138 (HR) each bind substrate. Glu174 is an active-site residue. Arg214 provides a ligand contact to substrate. His250 is a catalytic residue. Positions 252 and 363 each coordinate substrate. Cys369 acts as the Nucleophile in catalysis.

This sequence belongs to the succinylarginine dihydrolase family. Homodimer.

It carries out the reaction N(2)-succinyl-L-arginine + 2 H2O + 2 H(+) = N(2)-succinyl-L-ornithine + 2 NH4(+) + CO2. It functions in the pathway amino-acid degradation; L-arginine degradation via AST pathway; L-glutamate and succinate from L-arginine: step 2/5. Catalyzes the hydrolysis of N(2)-succinylarginine into N(2)-succinylornithine, ammonia and CO(2). In Shewanella woodyi (strain ATCC 51908 / MS32), this protein is N-succinylarginine dihydrolase.